A 261-amino-acid polypeptide reads, in one-letter code: MARKPLIAGNWKMNLNHLEAIALVQKIAFSLPAKYFDKVDVTVIPPFTDIRSVQTLVEGDKLLLTYGAQDVSAHDSGAYTGEISGSMLAKLGCTFVVVGHSERRTLHCEDNDTVLAKTKAALKNGITPIVCIGEGLDVREAGEHVSYNVEQLRGSLAGLSGEDIAKVVIAYEPVWAIGTGRVASAANAQEVCAAIRATLGELASQDVASGVRVLYGGSVNAKNVGEIVGQTDVDGALVGGASLKADEFATLSAIAAGGPLP.

10 to 12 is a substrate binding site; it reads NWK. His100 functions as the Electrophile in the catalytic mechanism. The active-site Proton acceptor is Glu172. Substrate contacts are provided by residues Gly178, Ser218, and 239–240; that span reads GG.

It belongs to the triosephosphate isomerase family. As to quaternary structure, homodimer.

The protein localises to the cytoplasm. The enzyme catalyses D-glyceraldehyde 3-phosphate = dihydroxyacetone phosphate. The protein operates within carbohydrate biosynthesis; gluconeogenesis. It functions in the pathway carbohydrate degradation; glycolysis; D-glyceraldehyde 3-phosphate from glycerone phosphate: step 1/1. Functionally, involved in the gluconeogenesis. Catalyzes stereospecifically the conversion of dihydroxyacetone phosphate (DHAP) to D-glyceraldehyde-3-phosphate (G3P). The chain is Triosephosphate isomerase from Rhodococcus jostii (strain RHA1).